A 466-amino-acid polypeptide reads, in one-letter code: Heat stress transcription factor A-5 (466 aa).

Residues Pro-21–Pro-115 mediate DNA binding. The segment at Ser-125–Ile-191 is hydrophobic repeat HR-A/B. The short motif at Lys-198–Arg-217 is the Bipartite nuclear localization signal element. 3 disordered regions span residues Lys-215–Phe-248, His-272–Arg-300, and Thr-422–Leu-466. Residues Leu-218–Leu-233 are compositionally biased toward basic and acidic residues. The AHA signature appears at Asp-414–Glu-423. Polar residues-rich tracts occupy residues Pro-425 to Arg-438 and Leu-455 to Leu-466. The short motif at Ile-461–Leu-466 is the Nuclear export signal element.

Belongs to the HSF family. Class A subfamily. As to quaternary structure, homotrimer. Exhibits temperature-dependent phosphorylation.

Its subcellular location is the cytoplasm. It localises to the nucleus. Its function is as follows. Transcriptional activator that specifically binds DNA sequence 5'-AGAAnnTTCT-3' known as heat shock promoter elements (HSE). The polypeptide is Heat stress transcription factor A-5 (HSFA5) (Arabidopsis thaliana (Mouse-ear cress)).